We begin with the raw amino-acid sequence, 58 residues long: Metallothionein-1 (58 aa).

Positions 1-28 (PGPCCKDKCECAEGGCKTGCKCTSCRCA) are beta. 18 residues coordinate a divalent metal cation: Cys4, Cys5, Cys9, Cys11, Cys16, Cys20, Cys22, Cys25, Cys27, Cys30, Cys33, Cys37, Cys39, Cys45, Cys49, Cys53, Cys55, and Cys56. Residues 29–58 (PCEKCTSGCKCPSKDECAKTCSKPCSCCXX) form an alpha region.

The protein belongs to the metallothionein superfamily. Type 3 family.

Its function is as follows. Metallothioneins have a high content of cysteine residues that bind various heavy metals. The different forms of lobster metallothioneins may have different biological functions. Class I MTS in marine crustacea are involved in the sequestration of elevated levels of heavy-metal ions. Binds 6 metal ions. Known to bind cadmium. This Homarus americanus (American lobster) protein is Metallothionein-1.